Consider the following 450-residue polypeptide: Oxygen-independent coproporphyrinogen III oxidase (450 aa).

Residues 45 to 282 (IPAGGSISLY…RTLILWDGYQ (238 aa)) form the Radical SAM core domain. Position 54 (Tyr54) interacts with S-adenosyl-L-methionine. Residues Cys60 and Cys64 each coordinate [4Fe-4S] cluster. Position 66 (Phe66) interacts with S-adenosyl-L-methionine. [4Fe-4S] cluster is bound at residue Cys67. Residues Gly111, 112 to 113 (GT), Glu144, Gln171, Arg183, Asp208, Ala242, and Ile328 contribute to the S-adenosyl-L-methionine site.

The protein belongs to the anaerobic coproporphyrinogen-III oxidase family. In terms of assembly, monomer. [4Fe-4S] cluster is required as a cofactor.

The protein resides in the cytoplasm. The enzyme catalyses coproporphyrinogen III + 2 S-adenosyl-L-methionine = protoporphyrinogen IX + 2 5'-deoxyadenosine + 2 L-methionine + 2 CO2. Its pathway is porphyrin-containing compound metabolism; protoporphyrin-IX biosynthesis; protoporphyrinogen-IX from coproporphyrinogen-III (AdoMet route): step 1/1. In terms of biological role, involved in the heme and chlorophyll biosynthesis. Catalyzes the anaerobic oxidative decarboxylation of propionate groups of rings A and B of coproporphyrinogen III to yield the vinyl groups in protoporphyrinogen IX. This Cereibacter sphaeroides (strain ATCC 17023 / DSM 158 / JCM 6121 / CCUG 31486 / LMG 2827 / NBRC 12203 / NCIMB 8253 / ATH 2.4.1.) (Rhodobacter sphaeroides) protein is Oxygen-independent coproporphyrinogen III oxidase (hemZ).